The chain runs to 872 residues: MGSLLALLALLLLWGAVAEGPAKKVLTLEGDLVLGGLFPVHQKGGPAEDCGPVNEHRGIQRLEAMLFALDRINRDPHLLPGVRLGAHILDSCSKDTHALEQALDFVRASLSRGADGSRHICPDGSYATHGDAPTAITGVIGGSYSDVSIQVANLLRLFQIPQISYASTSAKLSDKSRYDYFARTVPPDFFQAKAMAEILRFFNWTYVSTVASEGDYGETGIEAFELEARARNICVATSEKVGRAMSRAAFEGVVRALLQKPSARVAVLFTRSEDARELLAASQRLNASFTWVASDGWGALESVVAGSEGAAEGAITIELASYPISDFASYFQSLDPWNNSRNPWFREFWEQRFRCSFRQRDCAAHSLRAVPFEQESKIMFVVNAVYAMAHALHNMHRALCPNTTRLCDAMRPVNGRRLYKDFVLNVKFDAPFRPADTHNEVRFDRFGDGIGRYNIFTYLRAGSGRYRYQKVGYWAEGLTLDTSLIPWASPSAGPLPASRCSEPCLQNEVKSVQPGEVCCWLCIPCQPYEYRLDEFTCADCGLGYWPNASLTGCFELPQEYIRWGDAWAVGPVTIACLGALATLFVLGVFVRHNATPVVKASGRELCYILLGGVFLCYCMTFIFIAKPSTAVCTLRRLGLGTAFSVCYSALLTKTNRIARIFGGAREGAQRPRFISPASQVAICLALISGQLLIVVAWLVVEAPGTGKETAPERREVVTLRCNHRDASMLGSLAYNVLLIALCTLYAFKTRKCPENFNEAKFIGFTMYTTCIIWLAFLPIFYVTSSDYRVQTTTMCVSVSLSGSVVLGCLFAPKLHIILFQPQKNVVSHRAPTSRFGSAAARASSSLGQGSGSQFVPTVCNGREVVDSTTSSL.

The first 18 residues, 1–18 (MGSLLALLALLLLWGAVA), serve as a signal peptide directing secretion. At 19–567 (EGPAKKVLTL…QEYIRWGDAW (549 aa)) the chain is on the extracellular side. Cysteines 50 and 92 form a disulfide. Residues arginine 57, arginine 61, serine 145, alanine 166, and threonine 168 each coordinate L-glutamate. 2 N-linked (GlcNAc...) asparagine glycosylation sites follow: asparagine 203 and asparagine 286. 7 disulfide bridges follow: cysteine 234-cysteine 518, cysteine 355-cysteine 362, cysteine 400-cysteine 407, cysteine 500-cysteine 519, cysteine 504-cysteine 522, cysteine 525-cysteine 537, and cysteine 540-cysteine 553. Aspartate 295 contributes to the L-glutamate binding site. Asparagine 338 carries N-linked (GlcNAc...) asparagine glycosylation. Position 377 (lysine 377) interacts with L-glutamate. A glycan (N-linked (GlcNAc...) asparagine) is linked at asparagine 402. A glycan (N-linked (GlcNAc...) asparagine) is linked at asparagine 547. The chain crosses the membrane as a helical span at residues 568-590 (AVGPVTIACLGALATLFVLGVFV). The Cytoplasmic segment spans residues 591–604 (RHNATPVVKASGRE). A helical membrane pass occupies residues 605–625 (LCYILLGGVFLCYCMTFIFIA). Topologically, residues 626–636 (KPSTAVCTLRR) are extracellular. A disulfide bridge connects residues cysteine 632 and cysteine 721. A helical membrane pass occupies residues 637–655 (LGLGTAFSVCYSALLTKTN). The Cytoplasmic segment spans residues 656 to 679 (RIARIFGGAREGAQRPRFISPASQ). An important for interaction with HTR2A region spans residues 677-685 (ASQVAICLA). Residues 680 to 700 (VAICLALISGQLLIVVAWLVV) traverse the membrane as a helical segment. Residues 701-725 (EAPGTGKETAPERREVVTLRCNHRD) are Extracellular-facing. A helical transmembrane segment spans residues 726-747 (ASMLGSLAYNVLLIALCTLYAF). The Cytoplasmic portion of the chain corresponds to 748-760 (KTRKCPENFNEAK). A helical transmembrane segment spans residues 761-783 (FIGFTMYTTCIIWLAFLPIFYVT). Over 784-793 (SSDYRVQTTT) the chain is Extracellular. Residues 794 to 819 (MCVSVSLSGSVVLGCLFAPKLHIILF) traverse the membrane as a helical segment. Topologically, residues 820 to 872 (QPQKNVVSHRAPTSRFGSAAARASSSLGQGSGSQFVPTVCNGREVVDSTTSSL) are cytoplasmic.

Belongs to the G-protein coupled receptor 3 family. As to quaternary structure, forms heterodimers with GRM3 or GRM4. Interacts with TAMALIN. Interacts with HTR2A. (Microbial infection) Interacts with H5N6 virus protein HA. In terms of assembly, (Microbial infection) Interacts with rabies virus protein G. As to quaternary structure, (Microbial infection) Interacts with SARS-CoV-2 virus spike protein S. As to expression, detected in brain cortex (at protein level). Widely expressed in different regions of the adult brain as well as in fetal brain.

It is found in the cell membrane. The protein localises to the synapse. The protein resides in the cell projection. It localises to the dendrite. Its function is as follows. Dimeric G protein-coupled receptor which is activated by the excitatory neurotransmitter L-glutamate. Plays critical roles in modulating synaptic transmission and neuronal excitability. Upon activation by glutamate, inhibits presynaptic calcium channels, reducing further glutamate release and dampening excitatory signaling. Mechanistically, ligand binding causes a conformation change that triggers signaling via guanine nucleotide-binding proteins (G proteins) and modulates the activity of down-stream effectors, such as adenylate cyclase. May mediate suppression of neurotransmission or may be involved in synaptogenesis or synaptic stabilization. In terms of biological role, (Microbial infection) Plays an important role in influenza virus internalization. Functionally, (Microbial infection) Acts as a host entry factor for rabies virus that hijacks the endocytosis of GRM2 to enter cells. (Microbial infection) Acts as a host entry factor for SARS-CoV-2 that hijacks the endocytosis of GRM2 to enter cells. The chain is Metabotropic glutamate receptor 2 from Homo sapiens (Human).